We begin with the raw amino-acid sequence, 198 residues long: DnaJ homolog subfamily C member 5 (198 aa).

4 positions are modified to phosphoserine: serine 8, serine 10, serine 12, and serine 15. The 70-residue stretch at 13–82 folds into the J domain; sequence GESLYHVLGL…RNIYDKYGSL (70 aa). Tyrosine 17 carries the phosphotyrosine modification. Lysine 56 bears the N6-acetyllysine mark. Phosphoserine is present on serine 151.

Homodimer. Interacts with the chaperone complex consisting of HSC70 and SGTA. Interacts with ZDHHC13 (via ANK repeats). Interacts with ZDHHC17 (via ANK repeats). Interacts with SYT1, SYT5 and SYT7, and with SYT9, forming a complex with SNAP25. The interaction with SYT9 is stimulated tenfold in presence of calcium. In terms of processing, formation of the chaperone complex DNAJC5/HSC70 is not regulated by phosphorylation. Ser-10 phosphorylation induces an order-to-disorder transition triggering the interaction with Lys-58. This conformational switch modulates DNAJC5's cellular functions by reducing binding to syntaxin and synaptogamin without altering HSC70 interactions. Post-translationally, palmitoylated. Could be palmitoylated by DHHC3, DHHC7, DHHC15 and DHHC17. Palmitoylation occurs probably in the cysteine-rich domain and regulates DNAJC5 membrane attachment.

Its subcellular location is the cytoplasm. It is found in the cytosol. The protein resides in the membrane. It localises to the cytoplasmic vesicle. The protein localises to the secretory vesicle. Its subcellular location is the chromaffin granule membrane. It is found in the melanosome. The protein resides in the cell membrane. Its function is as follows. Acts as a co-chaperone for the SNARE protein SNAP-25. Involved in the calcium-mediated control of a late stage of exocytosis. Acts as a general chaperone in regulated exocytosis. May have an important role in presynaptic function. May be involved in calcium-dependent neurotransmitter release at nerve endings. The chain is DnaJ homolog subfamily C member 5 from Mus musculus (Mouse).